The chain runs to 448 residues: Nucleoprotein (448 aa).

Positions 1 to 55 (MSFTPGKQSSSRASSGNRSGNGILKWADQSDQVRNVQTRGRRAQPKQTATSQQPS) are disordered. Low complexity predominate over residues 9-22 (SSSRASSGNRSGNG). Polar residues-rich tracts occupy residues 29–38 (QSDQVRNVQT) and 45–55 (PKQTATSQQPS). Positions 52–194 (QQPSGGNVVP…GYYIEGSGRS (143 aa)) are RNA-binding. The CoV N NTD domain maps to 61–190 (PYYSWFSGIT…VLPQGYYIEG (130 aa)). The RNA site is built by R106, R122, and R164. Disordered stretches follow at residues 158 to 231 (PADI…VTPD), 266 to 293 (ILNK…GPNQ), and 385 to 448 (GMMN…TSEI). A Phosphoserine; by host modification is found at S167. Residue T174 is modified to Phosphothreonine; by host. S191 is modified (phosphoserine; by host). Positions 193–223 (RSAPNSRSTSRTSSRASSAGSRSRANSGNRT) are enriched in low complexity. Residues 259-384 (AKEVRQKILN…ENLNAYQQQD (126 aa)) enclose the CoV N CTD domain. Residues 266–276 (ILNKPRQKRSP) are compositionally biased toward basic residues. The segment at 266–384 (ILNKPRQKRS…ENLNAYQQQD (119 aa)) is dimerization. Phosphoserine; by host is present on residues S390 and S423. Basic and acidic residues predominate over residues 422–439 (KSRELTAEDISLLKKMDE). Position 427 is a phosphothreonine; by host (T427).

This sequence belongs to the betacoronavirus nucleocapsid protein family. As to quaternary structure, homooligomer. Both monomeric and oligomeric forms interact with RNA. Interacts with protein M. Interacts with NSP3; this interaction serves to tether the genome to the newly translated replicase-transcriptase complex at a very early stage of infection. Post-translationally, ADP-ribosylated. The ADP-ribosylation is retained in the virion during infection. Phosphorylated on serine and threonine residues. In terms of processing, proteolytically cleaved by host CASP6. The cleavage leads to two fragments and facilitates viral replication by inhibiting host IFN signaling. The two fragments may interact with IRF3 inhibiting its nuclear translocation after activation and reduce the expression of IFNB and IFN-stimulated genes.

It localises to the virion. The protein resides in the host endoplasmic reticulum-Golgi intermediate compartment. Its subcellular location is the host Golgi apparatus. In terms of biological role, packages the positive strand viral genome RNA into a helical ribonucleocapsid (RNP) and plays a fundamental role during virion assembly through its interactions with the viral genome and membrane protein M. Plays an important role in enhancing the efficiency of subgenomic viral RNA transcription as well as viral replication. Attenuates the stress granules formation by reducing host G3BP1 access to host mRNAs under stress conditions. The polypeptide is Nucleoprotein (Homo sapiens (Human)).